The chain runs to 224 residues: Phosphoribosylformylglycinamidine synthase subunit PurQ (224 aa).

Residues 2–224 (KFAVIVFPGS…IVDNFVKGGV (223 aa)) enclose the Glutamine amidotransferase type-1 domain. The active-site Nucleophile is cysteine 86. Residues histidine 194 and glutamate 196 contribute to the active site.

Part of the FGAM synthase complex composed of 1 PurL, 1 PurQ and 2 PurS subunits.

The protein localises to the cytoplasm. The enzyme catalyses N(2)-formyl-N(1)-(5-phospho-beta-D-ribosyl)glycinamide + L-glutamine + ATP + H2O = 2-formamido-N(1)-(5-O-phospho-beta-D-ribosyl)acetamidine + L-glutamate + ADP + phosphate + H(+). It catalyses the reaction L-glutamine + H2O = L-glutamate + NH4(+). It participates in purine metabolism; IMP biosynthesis via de novo pathway; 5-amino-1-(5-phospho-D-ribosyl)imidazole from N(2)-formyl-N(1)-(5-phospho-D-ribosyl)glycinamide: step 1/2. Part of the phosphoribosylformylglycinamidine synthase complex involved in the purines biosynthetic pathway. Catalyzes the ATP-dependent conversion of formylglycinamide ribonucleotide (FGAR) and glutamine to yield formylglycinamidine ribonucleotide (FGAM) and glutamate. The FGAM synthase complex is composed of three subunits. PurQ produces an ammonia molecule by converting glutamine to glutamate. PurL transfers the ammonia molecule to FGAR to form FGAM in an ATP-dependent manner. PurS interacts with PurQ and PurL and is thought to assist in the transfer of the ammonia molecule from PurQ to PurL. The sequence is that of Phosphoribosylformylglycinamidine synthase subunit PurQ from Caldanaerobacter subterraneus subsp. tengcongensis (strain DSM 15242 / JCM 11007 / NBRC 100824 / MB4) (Thermoanaerobacter tengcongensis).